The primary structure comprises 234 residues: Sugar fermentation stimulation protein homolog (234 aa).

Belongs to the SfsA family.

This chain is Sugar fermentation stimulation protein homolog, found in Pectobacterium carotovorum subsp. carotovorum (strain PC1).